The chain runs to 388 residues: 5-hydroxytryptamine receptor 1B (388 aa).

Residues 1-29 form a disordered region; that stretch reads MEQPSRLCSPPASGSLTSSQTNHSTFPNP. The Extracellular portion of the chain corresponds to 1-45; sequence MEQPSRLCSPPASGSLTSSQTNHSTFPNPNCSAPDLEPYQDSIAL. Polar residues predominate over residues 12–29; it reads ASGSLTSSQTNHSTFPNP. Asparagine 22 and asparagine 30 each carry an N-linked (GlcNAc...) asparagine glycan. A helical membrane pass occupies residues 46 to 71; it reads PWKVLLATFLGLITLGTTLSNAFVIA. Topologically, residues 72 to 85 are cytoplasmic; sequence TVSRTRKLHTPANY. The helical transmembrane segment at 86–110 threads the bilayer; the sequence is LIASLAVTDLLVSILVMPISTMYTV. Over 111–118 the chain is Extracellular; sequence TGRWTLGQ. The helical transmembrane segment at 119 to 144 threads the bilayer; the sequence is VVCDFWLSSDITCCTASILHLCVIAL. Cysteine 121 and cysteine 197 form a disulfide bridge. Ergotamine-binding residues include aspartate 128 and threonine 133. A DRY motif; important for ligand-induced conformation changes and signaling motif is present at residues 145 to 147; the sequence is DRY. At 145–164 the chain is on the cytoplasmic side; the sequence is DRYWAITDAVEYSAKRTPKR. The chain crosses the membrane as a helical span at residues 165-183; it reads AAGMIIMVWVFSVSISMPP. Residues 184–203 are Extracellular-facing; the sequence is LFWRQAKAEEVADCSVNTDH. An ergotamine-binding site is contributed by valine 199. A helical membrane pass occupies residues 204–227; sequence ILYTVYSTVGAFYFPTLLLIALYG. The Cytoplasmic segment spans residues 228 to 313; sequence RIYVEARSRI…AARERKATRT (86 aa). A disordered region spans residues 249–282; the sequence is LTRAQLITDSPGSSSSGTSINSRAPEGPSESGSP. Positions 255-270 are enriched in low complexity; it reads ITDSPGSSSSGTSINS. The helical transmembrane segment at 314–335 threads the bilayer; it reads LGIILGAFIVCWLPFFIISLAL. Over 336–345 the chain is Extracellular; it reads PICDDACWFH. A helical transmembrane segment spans residues 346-368; sequence LAIFDFFNWLGYLNSLINPIIYT. An NPxxY motif; important for ligand-induced conformation changes and signaling motif is present at residues 363-367; that stretch reads NPIIY. The Cytoplasmic portion of the chain corresponds to 369–388; sequence KSNDDFKQAFQKLMRFRRTS.

This sequence belongs to the G-protein coupled receptor 1 family. As to quaternary structure, homodimer. Heterodimer with HTR1D. In terms of processing, phosphorylated. Desensitization of the receptor may be mediated by its phosphorylation. Post-translationally, palmitoylated.

It is found in the cell membrane. Its function is as follows. G-protein coupled receptor for 5-hydroxytryptamine (serotonin). Also functions as a receptor for ergot alkaloid derivatives, various anxiolytic and antidepressant drugs and other psychoactive substances, such as lysergic acid diethylamide (LSD). Ligand binding causes a conformation change that triggers signaling via guanine nucleotide-binding proteins (G proteins) and modulates the activity of downstream effectors, such as adenylate cyclase. HTR1B is coupled to G(i)/G(o) G alpha proteins and mediates inhibitory neurotransmission by inhibiting adenylate cyclase activity. Arrestin family members inhibit signaling via G proteins and mediate activation of alternative signaling pathways. Regulates the release of 5-hydroxytryptamine, dopamine and acetylcholine in the brain, and thereby affects neural activity, nociceptive processing, pain perception, mood and behavior. Besides, plays a role in vasoconstriction of cerebral arteries. The chain is 5-hydroxytryptamine receptor 1B (HTR1B) from Didelphis virginiana (North American opossum).